The primary structure comprises 562 residues: MYDRAPRFTQLTLSSTTSEIGPGTYNINRSLGGDRGSYAPFLSLSIRDSGFLGSASALHSPGPGQYNSDITRNHVLGGNSLQNRSKRFDDVLSDVPGPGAYNVTNDVSPARKIKAKSPKITSKAVRPSLSPAAPSIPSPGQAFGYEEDAQGVLHKHKVPSRDHSLGPAFYSPAPEELWSSQKYKGVQFGKMSGRREPLKGADEPGPGHYELQEDQTVQYENVNVKREQRSRSELSIPRYHELVPLQEEKKGVPGPGQYYIKSQFETSSNTHRPAQSPPFLSQAQRFSPVKDETPPVGAYNDPRCALEILKKGRALNKNPFGQTAVRFLPENRSKATPGPGAYNMFGYGLAQESLKKASLQSSRKAAFGSVAQRRIFLPSKEEMSTPGPTQYKVEKTNEALYKKQSTAAFKSASDRLVVSLFAKDTPPPGSYNVSQSFEKTQCLHQYSKPRNENARKRQSCFLSAASRNTDVLHNDPHTPGPAYYSPDVKSSSTLALIISKEDRFKDPKDEVPGPTAYELSPVIMDTVLKGTFNVTLHNPLMSSTRSLSSHRSWRKPTAHSSA.

3 STPGR repeats span residues glycine 21–leucine 31, serine 60–asparagine 73, and proline 96–proline 118. Disordered stretches follow at residues lysine 114–isoleucine 136 and serine 192–glutamine 215. Positions proline 127–isoleucine 136 are enriched in low complexity. A compositionally biased stretch (basic and acidic residues) spans glycine 193–aspartate 202. STPGR repeat units lie at residues proline 204–glutamate 227, proline 253–histidine 271, threonine 336–alanine 350, threonine 385–phenylalanine 409, threonine 425–leucine 462, and threonine 478–serine 492. Residues serine 543–alanine 562 form a disordered region. Residues arginine 551 to alanine 562 are compositionally biased toward basic residues.

In Danio rerio (Zebrafish), this protein is Sperm-tail PG-rich repeat-containing protein 2 (stpg2).